Here is a 286-residue protein sequence, read N- to C-terminus: Glucose import system permease protein GlcT (286 aa).

Helical transmembrane passes span 6-26 (TIIL…LVIW), 71-91 (VILV…LYFL), 103-123 (IVIY…LWLF), 154-174 (LVLV…LAGF), 199-219 (ILIP…FLFS), and 260-280 (VATM…LTVI). The 213-residue stretch at 63–275 (LLHSIELSVI…LIATIIIIPY (213 aa)) folds into the ABC transmembrane type-1 domain.

This sequence belongs to the binding-protein-dependent transport system permease family. As to quaternary structure, the complex is composed of two ATP-binding proteins (GlcV), two transmembrane proteins (GlcT and GlcU) and a solute-binding protein (GlcS).

Its subcellular location is the cell membrane. Its function is as follows. Part of the ABC transporter complex GlcSTUV involved in glucose uptake. Responsible for the translocation of the substrate across the membrane. This chain is Glucose import system permease protein GlcT, found in Saccharolobus solfataricus (strain ATCC 35092 / DSM 1617 / JCM 11322 / P2) (Sulfolobus solfataricus).